A 142-amino-acid polypeptide reads, in one-letter code: Large ribosomal subunit protein uL11 (142 aa).

The protein belongs to the universal ribosomal protein uL11 family. As to quaternary structure, part of the ribosomal stalk of the 50S ribosomal subunit. Interacts with L10 and the large rRNA to form the base of the stalk. L10 forms an elongated spine to which L12 dimers bind in a sequential fashion forming a multimeric L10(L12)X complex. One or more lysine residues are methylated.

In terms of biological role, forms part of the ribosomal stalk which helps the ribosome interact with GTP-bound translation factors. The protein is Large ribosomal subunit protein uL11 of Mycoplasma capricolum subsp. capricolum (strain California kid / ATCC 27343 / NCTC 10154).